We begin with the raw amino-acid sequence, 318 residues long: Beta-ketoacyl-[acyl-carrier-protein] synthase III (318 aa).

Catalysis depends on residues cysteine 113 and histidine 245. The interval 246–250 (QANIR) is ACP-binding. Asparagine 275 is a catalytic residue.

Belongs to the thiolase-like superfamily. FabH family. As to quaternary structure, homodimer.

It localises to the cytoplasm. The enzyme catalyses malonyl-[ACP] + acetyl-CoA + H(+) = 3-oxobutanoyl-[ACP] + CO2 + CoA. Its pathway is lipid metabolism; fatty acid biosynthesis. Functionally, catalyzes the condensation reaction of fatty acid synthesis by the addition to an acyl acceptor of two carbons from malonyl-ACP. Catalyzes the first condensation reaction which initiates fatty acid synthesis and may therefore play a role in governing the total rate of fatty acid production. Possesses both acetoacetyl-ACP synthase and acetyl transacylase activities. Its substrate specificity determines the biosynthesis of branched-chain and/or straight-chain of fatty acids. This is Beta-ketoacyl-[acyl-carrier-protein] synthase III from Wolbachia pipientis subsp. Culex pipiens (strain wPip).